The primary structure comprises 601 residues: Leucine zipper putative tumor suppressor 1 (601 aa).

The N-myristoyl glycine moiety is linked to residue G2. The interval 135-190 is disordered; it reads GAILHSSPESTNHQLHPMPPDKPKEQELKPGLCSGALSDSGRNSMSSLPTHSTTSS. Positions 153–162 are enriched in basic and acidic residues; sequence PPDKPKEQEL. The segment covering 174 to 190 has biased composition (polar residues); it reads SGRNSMSSLPTHSTTSS. Residues 255 to 573 are a coiled coil; the sequence is PLSTDECTIQ…RLEKALQQLA (319 aa).

This sequence belongs to the LZTS family. Binds EEF1G, TLK2 and CDK1. In terms of processing, phosphorylated on serine residues. Hyperphosphorylated by the cAMP-dependent kinase PKA during cell-cycle progression. As to expression, highly expressed in brain, in particular in cortex, the CA2 region of the hippocampus, olfactory bulb, striatum and pons. Not detectable in the other tissues tested.

The protein resides in the cytoplasm. It localises to the cell membrane. The protein localises to the cell projection. It is found in the dendritic spine. Its subcellular location is the postsynaptic density. The protein resides in the synapse. Functionally, involved in the regulation of cell growth. May stabilize the active CDC2-cyclin B1 complex and thereby contribute to the regulation of the cell cycle and the prevention of uncontrolled cell proliferation. May act as tumor suppressor. The sequence is that of Leucine zipper putative tumor suppressor 1 (Lzts1) from Rattus norvegicus (Rat).